A 318-amino-acid polypeptide reads, in one-letter code: Transaldolase (318 aa).

The Schiff-base intermediate with substrate role is filled by Lys-126.

It belongs to the transaldolase family. Type 1 subfamily. As to quaternary structure, homodimer.

It localises to the cytoplasm. The enzyme catalyses D-sedoheptulose 7-phosphate + D-glyceraldehyde 3-phosphate = D-erythrose 4-phosphate + beta-D-fructose 6-phosphate. Its pathway is carbohydrate degradation; pentose phosphate pathway; D-glyceraldehyde 3-phosphate and beta-D-fructose 6-phosphate from D-ribose 5-phosphate and D-xylulose 5-phosphate (non-oxidative stage): step 2/3. In terms of biological role, transaldolase is important for the balance of metabolites in the pentose-phosphate pathway. This chain is Transaldolase, found in Cupriavidus necator (strain ATCC 17699 / DSM 428 / KCTC 22496 / NCIMB 10442 / H16 / Stanier 337) (Ralstonia eutropha).